A 341-amino-acid chain; its full sequence is 3-keto-steroid reductase/17-beta-hydroxysteroid dehydrogenase 7 (341 aa).

The Extracellular portion of the chain corresponds to 1 to 229 (MRKVVLITGA…VACPGTALTN (229 aa)). 8-15 (TGASSGIG) contacts NAD(+). The N-linked (GlcNAc...) asparagine glycan is linked to asparagine 37. Residue serine 171 coordinates substrate. The N-linked (GlcNAc...) asparagine glycan is linked to asparagine 178. Tyrosine 193 functions as the Proton acceptor in the catalytic mechanism. A glycan (N-linked (GlcNAc...) asparagine) is linked at asparagine 229. Residues 230 to 250 (LTYGILPPFIWTLLMPAILLL) traverse the membrane as a helical segment. Residues 251 to 341 (RFFANAFTLT…NQARLSGSCL (91 aa)) are Cytoplasmic-facing.

Belongs to the short-chain dehydrogenases/reductases (SDR) family. ERG27 subfamily. In terms of assembly, binds to the short form of prolactin receptor. Phosphorylated. As to expression, highly expressed in adrenal gland, liver, lung and thymus. Expressed in breast, ovaries, pituitary gland, pregnant uterus, prostate, kidney, lymph node, small intestine, spinal cord and trachea. Weakly expressed in all other tissues tested. Expressed in eye ciliary epithelial cells and neuroendocrine cells.

The protein resides in the endoplasmic reticulum membrane. It catalyses the reaction 17beta-estradiol + NADP(+) = estrone + NADPH + H(+). It carries out the reaction a 3beta-hydroxysteroid + NADP(+) = a 3-oxosteroid + NADPH + H(+). The catalysed reaction is 3-dehydro-4alpha-methylzymosterol + NADPH + H(+) = 4alpha-methylzymosterol + NADP(+). The enzyme catalyses zymosterone + NADPH + H(+) = zymosterol + NADP(+). It catalyses the reaction 4alpha-methyl-5alpha-cholest-8-en-3-one + NADPH + H(+) = 4alpha-methyl-5alpha-cholest-8-en-3beta-ol + NADP(+). It carries out the reaction 4alpha-methyl-5alpha-cholest-7-en-3beta-ol + NADP(+) = 4alpha-methyl-5alpha-cholest-7-en-3-one + NADPH + H(+). The catalysed reaction is 5alpha-cholest-8-en-3-one + NADPH + H(+) = 5alpha-cholest-8-en-3beta-ol + NADP(+). The enzyme catalyses 5alpha-androstane-3beta,17beta-diol + NADP(+) = 17beta-hydroxy-5alpha-androstan-3-one + NADPH + H(+). It catalyses the reaction progesterone + NADPH + H(+) = 3beta-hydroxypregn-4-ene-20-one + NADP(+). It participates in steroid biosynthesis; estrogen biosynthesis. Its pathway is steroid biosynthesis; zymosterol biosynthesis; zymosterol from lanosterol: step 5/6. With respect to regulation, estradiol 17-beta-dehydrogenase and dihydrotestosterone oxidoreductase activities are selectively inhibited by 4-methyl-4-aza-5alpha-androstane derivatives, such as 17beta-[(N-Heptyl)methylamino]-4-aza-5r-androstan-3-one and 17beta-(N-Decylformamido)-4-aza-5r-androstan-3-one. Bifunctional enzyme involved in steroid-hormone metabolism and cholesterol biosynthesis. Catalyzes the NADP(H)-dependent reduction of estrogens and androgens and regulates the biological potency of these steroids. Converts estrone (E1) to a more potent estrogen, 17beta-estradiol (E2). Converts dihydrotestosterone (DHT) to its inactive form 5a-androstane-3b,17b-diol. Converts moderately progesterone to 3beta-hydroxypregn-4-ene-20-one, leading to its inactivation. Additionally, participates in the post-squalene cholesterol biosynthesis, as a 3-ketosteroid reductase. In terms of biological role, does not have enzymatic activities toward E1 and DHT. The sequence is that of 3-keto-steroid reductase/17-beta-hydroxysteroid dehydrogenase 7 (HSD17B7) from Homo sapiens (Human).